The primary structure comprises 439 residues: Ribulose bisphosphate carboxylase/oxygenase activase 2, chloroplastic (439 aa).

A chloroplast-targeting transit peptide spans M1 to A58. G169–S176 provides a ligand contact to ATP.

The protein belongs to the RuBisCO activase family.

Its subcellular location is the plastid. The protein localises to the chloroplast stroma. In terms of biological role, activation of RuBisCO (ribulose-1,5-bisphosphate carboxylase/oxygenase; EC 4.1.1.39) involves the ATP-dependent carboxylation of the epsilon-amino group of lysine leading to a carbamate structure. The sequence is that of Ribulose bisphosphate carboxylase/oxygenase activase 2, chloroplastic (RCA) from Nicotiana tabacum (Common tobacco).